The chain runs to 30 residues: Cycloviolin-C (30 aa).

A cross-link (cyclopeptide (Gly-Asn)) is located at residues 1 to 30; sequence GIPCGESCVFIPCLTTVAGCSCKNKVCYRN. 3 disulfides stabilise this stretch: cysteine 4–cysteine 20, cysteine 8–cysteine 22, and cysteine 13–cysteine 27.

In terms of processing, this is a cyclic peptide.

In terms of biological role, probably participates in a plant defense mechanism. Has anti-HIV activity. The chain is Cycloviolin-C from Leonia cymosa (Sacha uba).